A 401-amino-acid polypeptide reads, in one-letter code: Alpha-(1,4)-fucosyltransferase (401 aa).

At 1–4 the chain is on the cytoplasmic side; that stretch reads MPMR. A helical; Signal-anchor for type II membrane protein transmembrane segment spans residues 5-27; sequence YLNAMAALLMMFFTLLILSFTGI. Topologically, residues 28-401 are lumenal; it reads LEFPSASTSM…SRRGGKNAGV (374 aa). The N-linked (GlcNAc...) asparagine glycan is linked to Asn85.

This sequence belongs to the glycosyltransferase 10 family. In terms of tissue distribution, present in root, stem, flower buds and green siliques.

Its subcellular location is the golgi apparatus. The protein resides in the golgi stack membrane. It participates in protein modification; protein glycosylation. Functionally, may be involved in cell wall synthesis. Catalyzes alpha-1,4 glycosidic linkages and generates Lewis-a epitopes. The chain is Alpha-(1,4)-fucosyltransferase (FUT13) from Arabidopsis thaliana (Mouse-ear cress).